The following is a 247-amino-acid chain: DNA repair protein RecO (247 aa).

The protein belongs to the RecO family.

Its function is as follows. Involved in DNA repair and RecF pathway recombination. This is DNA repair protein RecO from Methylocella silvestris (strain DSM 15510 / CIP 108128 / LMG 27833 / NCIMB 13906 / BL2).